The chain runs to 341 residues: L-sulfolactate dehydrogenase (341 aa).

Belongs to the LDH2/MDH2 oxidoreductase family.

The protein localises to the cytoplasm. The catalysed reaction is a (2S)-2-hydroxycarboxylate + NAD(+) = a 2-oxocarboxylate + NADH + H(+). It participates in cofactor biosynthesis; coenzyme M biosynthesis; sulfoacetaldehyde from phosphoenolpyruvate and sulfite: step 3/4. The protein operates within cofactor biosynthesis; 5,6,7,8-tetrahydromethanopterin biosynthesis. Its function is as follows. Catalyzes the reduction of sulfopyruvate to (R)-sulfolactate. Involved in the biosynthesis of both coenzyme M (with (R)-sulfolactate) and methanopterin (with alpha-ketoglutarate). This chain is L-sulfolactate dehydrogenase (comC), found in Methanothermobacter thermautotrophicus (strain ATCC 29096 / DSM 1053 / JCM 10044 / NBRC 100330 / Delta H) (Methanobacterium thermoautotrophicum).